The primary structure comprises 242 residues: Probable transcriptional regulatory protein XCV3282 (242 aa).

The protein belongs to the TACO1 family.

The protein localises to the cytoplasm. This chain is Probable transcriptional regulatory protein XCV3282, found in Xanthomonas euvesicatoria pv. vesicatoria (strain 85-10) (Xanthomonas campestris pv. vesicatoria).